The primary structure comprises 397 residues: 1-deoxy-D-xylulose 5-phosphate reductoisomerase (397 aa).

The NADPH site is built by Thr-12, Gly-13, Ser-14, Ile-15, Gly-38, Lys-39, Asn-40, and Asn-126. Lys-127 lines the 1-deoxy-D-xylulose 5-phosphate pocket. Glu-128 provides a ligand contact to NADPH. Asp-152 contacts Mn(2+). 4 residues coordinate 1-deoxy-D-xylulose 5-phosphate: Ser-153, Glu-154, Ser-188, and His-211. Position 154 (Glu-154) interacts with Mn(2+). Residue Gly-217 coordinates NADPH. Positions 224, 229, 230, and 233 each coordinate 1-deoxy-D-xylulose 5-phosphate. Glu-233 lines the Mn(2+) pocket.

The protein belongs to the DXR family. It depends on Mg(2+) as a cofactor. Mn(2+) serves as cofactor.

The catalysed reaction is 2-C-methyl-D-erythritol 4-phosphate + NADP(+) = 1-deoxy-D-xylulose 5-phosphate + NADPH + H(+). Its pathway is isoprenoid biosynthesis; isopentenyl diphosphate biosynthesis via DXP pathway; isopentenyl diphosphate from 1-deoxy-D-xylulose 5-phosphate: step 1/6. Its function is as follows. Catalyzes the NADPH-dependent rearrangement and reduction of 1-deoxy-D-xylulose-5-phosphate (DXP) to 2-C-methyl-D-erythritol 4-phosphate (MEP). The protein is 1-deoxy-D-xylulose 5-phosphate reductoisomerase of Haemophilus influenzae (strain 86-028NP).